The chain runs to 329 residues: Lipoyl synthase (329 aa).

Residues cysteine 72, cysteine 77, cysteine 83, cysteine 98, cysteine 102, cysteine 105, and serine 313 each coordinate [4Fe-4S] cluster. One can recognise a Radical SAM core domain in the interval 83 to 303 (CWSHGTATIM…QIGLKKGFFE (221 aa)).

This sequence belongs to the radical SAM superfamily. Lipoyl synthase family. [4Fe-4S] cluster is required as a cofactor.

It localises to the cytoplasm. It carries out the reaction [[Fe-S] cluster scaffold protein carrying a second [4Fe-4S](2+) cluster] + N(6)-octanoyl-L-lysyl-[protein] + 2 oxidized [2Fe-2S]-[ferredoxin] + 2 S-adenosyl-L-methionine + 4 H(+) = [[Fe-S] cluster scaffold protein] + N(6)-[(R)-dihydrolipoyl]-L-lysyl-[protein] + 4 Fe(3+) + 2 hydrogen sulfide + 2 5'-deoxyadenosine + 2 L-methionine + 2 reduced [2Fe-2S]-[ferredoxin]. It participates in protein modification; protein lipoylation via endogenous pathway; protein N(6)-(lipoyl)lysine from octanoyl-[acyl-carrier-protein]: step 2/2. Functionally, catalyzes the radical-mediated insertion of two sulfur atoms into the C-6 and C-8 positions of the octanoyl moiety bound to the lipoyl domains of lipoate-dependent enzymes, thereby converting the octanoylated domains into lipoylated derivatives. This is Lipoyl synthase from Legionella pneumophila (strain Paris).